Here is a 113-residue protein sequence, read N- to C-terminus: Guanylate cyclase activator 2B (113 aa).

Residues 1 to 27 (MASRAAAGLLLCGVALVFLVLLQGTQS) form the signal peptide. Positions 28 to 97 (VYIQYQGFRV…SIFQALRTIA (70 aa)) are excised as a propeptide. Intrachain disulfides connect C68-C81, C101-C109, and C104-C112.

It belongs to the guanylin family.

The protein resides in the secreted. Functionally, endogenous activator of intestinal guanylate cyclase. It stimulates this enzyme through the same receptor binding region as the heat-stable enterotoxins. May be a potent physiological regulator of intestinal fluid and electrolyte transport. May be an autocrine/paracrine regulator of intestinal salt and water transport. This Sus scrofa (Pig) protein is Guanylate cyclase activator 2B (GUCA2B).